A 326-amino-acid polypeptide reads, in one-letter code: Zona pellucida-binding protein 2 (326 aa).

Positions 1-19 are cleaved as a signal peptide; that stretch reads MLAWALLYAVLWSLAGVGS. Residues Asn-86, Asn-220, and Asn-256 are each glycosylated (N-linked (GlcNAc...) asparagine).

The protein belongs to the zona pellucida-binding protein Sp38 family. In terms of processing, N-glycosylated. In terms of tissue distribution, expressed specifically in male germ cells.

It is found in the cytoplasmic vesicle. Its subcellular location is the secretory vesicle. The protein localises to the acrosome. The protein resides in the secreted. Functionally, is implicated in sperm-oocyte interaction during fertilization. The protein is Zona pellucida-binding protein 2 (Zpbp2) of Mus musculus (Mouse).